The primary structure comprises 364 residues: Spermidine/putrescine import ATP-binding protein PotA (364 aa).

Positions 5-235 (LSFKSVSKQY…PVNRFVADFI (231 aa)) constitute an ABC transporter domain. 37-44 (GPSGCGKT) contributes to the ATP binding site.

The protein belongs to the ABC transporter superfamily. Spermidine/putrescine importer (TC 3.A.1.11.1) family. The complex is composed of two ATP-binding proteins (PotA), two transmembrane proteins (PotB and PotC) and a solute-binding protein (PotD).

The protein localises to the cell membrane. It catalyses the reaction ATP + H2O + polyamine-[polyamine-binding protein]Side 1 = ADP + phosphate + polyamineSide 2 + [polyamine-binding protein]Side 1.. Part of the ABC transporter complex PotABCD involved in spermidine/putrescine import. Responsible for energy coupling to the transport system. The sequence is that of Spermidine/putrescine import ATP-binding protein PotA from Staphylococcus saprophyticus subsp. saprophyticus (strain ATCC 15305 / DSM 20229 / NCIMB 8711 / NCTC 7292 / S-41).